Here is a 251-residue protein sequence, read N- to C-terminus: Putative mediator of RNA polymerase II transcription subunit 18 (251 aa).

It belongs to the Mediator complex subunit 18 family. As to quaternary structure, component of the Mediator complex.

Its subcellular location is the nucleus. Its function is as follows. Component of the Mediator complex, a coactivator involved in the regulated transcription of nearly all RNA polymerase II-dependent genes. Mediator functions as a bridge to convey information from gene-specific regulatory proteins to the basal RNA polymerase II transcription machinery. Mediator is recruited to promoters by direct interactions with regulatory proteins and serves as a scaffold for the assembly of a functional preinitiation complex with RNA polymerase II and the general transcription factors. This chain is Putative mediator of RNA polymerase II transcription subunit 18 (med18), found in Dictyostelium discoideum (Social amoeba).